Reading from the N-terminus, the 207-residue chain is Guanylate kinase (207 aa).

Residues 7–185 (GIVLVLCAPS…AYDELRAAYI (179 aa)) enclose the Guanylate kinase-like domain. Position 14–21 (14–21 (APSGTGKT)) interacts with ATP.

Belongs to the guanylate kinase family.

It is found in the cytoplasm. It catalyses the reaction GMP + ATP = GDP + ADP. Functionally, essential for recycling GMP and indirectly, cGMP. In Nitratidesulfovibrio vulgaris (strain ATCC 29579 / DSM 644 / CCUG 34227 / NCIMB 8303 / VKM B-1760 / Hildenborough) (Desulfovibrio vulgaris), this protein is Guanylate kinase.